We begin with the raw amino-acid sequence, 132 residues long: Ribosome-binding factor A (132 aa).

Belongs to the RbfA family. As to quaternary structure, monomer. Binds 30S ribosomal subunits, but not 50S ribosomal subunits or 70S ribosomes.

The protein localises to the cytoplasm. In terms of biological role, one of several proteins that assist in the late maturation steps of the functional core of the 30S ribosomal subunit. Associates with free 30S ribosomal subunits (but not with 30S subunits that are part of 70S ribosomes or polysomes). Required for efficient processing of 16S rRNA. May interact with the 5'-terminal helix region of 16S rRNA. The polypeptide is Ribosome-binding factor A (Pseudomonas entomophila (strain L48)).